Reading from the N-terminus, the 372-residue chain is Galanin receptor type 2 (372 aa).

The Extracellular portion of the chain corresponds to 1–28 (MNGSGSQGAENTSQEGGSGGWQPEAVLV). N-linked (GlcNAc...) asparagine glycans are attached at residues Asn-2 and Asn-11. The chain crosses the membrane as a helical span at residues 29–49 (PLFFALIFLVGTVGNALVLAV). Over 50 to 60 (LLRGGQAVSTT) the chain is Cytoplasmic. A helical membrane pass occupies residues 61 to 81 (NLFILNLGVADLCFILCCVPF). The Extracellular portion of the chain corresponds to 82 to 99 (QATIYTLDDWVFGSLLCK). A disulfide bridge connects residues Cys-98 and Cys-175. A helical transmembrane segment spans residues 100–121 (AVHFLIFLTMHASSFTLAAVSL). The Cytoplasmic portion of the chain corresponds to 122–141 (DRYLAIRYPLHSRELRTPRN). A helical transmembrane segment spans residues 142–162 (ALAAIGLIWGLALLFSGPYLS). Over 163 to 187 (YYRQSQLANLTVCHPAWSAPRRRAM) the chain is Extracellular. The helical transmembrane segment at 188–208 (DLCTFVFSYLLPVLVLSLTYA) threads the bilayer. Over 209–237 (RTLRYLWRTVDPVTAGSGSQRAKRKVTRM) the chain is Cytoplasmic. The chain crosses the membrane as a helical span at residues 238–258 (IIIVAVLFCLCWMPHHALILC). The Extracellular portion of the chain corresponds to 259–260 (VW). The chain crosses the membrane as a helical span at residues 261–281 (FGRFPLTRATYALRILSHLVS). The Cytoplasmic segment spans residues 282–372 (YANSCVNPIV…ASSRTLDPAC (91 aa)). The interval 353–372 (VPPPALPNCTASSRTLDPAC) is disordered. Polar residues predominate over residues 361-372 (CTASSRTLDPAC).

It belongs to the G-protein coupled receptor 1 family.

It is found in the cell membrane. Functionally, receptor for the hormone galanin, GALP and spexin-1. The activity of this receptor is mediated by G proteins that activate the phospholipase C/protein kinase C pathway (via G(q)) and that inhibit adenylyl cyclase (via G(i)). The protein is Galanin receptor type 2 (Galr2) of Rattus norvegicus (Rat).